Here is a 320-residue protein sequence, read N- to C-terminus: Aspartate carbamoyltransferase catalytic subunit (320 aa).

Positions 70 and 71 each coordinate carbamoyl phosphate. L-aspartate is bound at residue K98. Carbamoyl phosphate is bound by residues R120, H149, and Q152. L-aspartate contacts are provided by R182 and R237. Carbamoyl phosphate contacts are provided by G278 and P279.

It belongs to the aspartate/ornithine carbamoyltransferase superfamily. ATCase family. Heterododecamer (2C3:3R2) of six catalytic PyrB chains organized as two trimers (C3), and six regulatory PyrI chains organized as three dimers (R2).

It carries out the reaction carbamoyl phosphate + L-aspartate = N-carbamoyl-L-aspartate + phosphate + H(+). Its pathway is pyrimidine metabolism; UMP biosynthesis via de novo pathway; (S)-dihydroorotate from bicarbonate: step 2/3. In terms of biological role, catalyzes the condensation of carbamoyl phosphate and aspartate to form carbamoyl aspartate and inorganic phosphate, the committed step in the de novo pyrimidine nucleotide biosynthesis pathway. This Ruthia magnifica subsp. Calyptogena magnifica protein is Aspartate carbamoyltransferase catalytic subunit.